A 390-amino-acid polypeptide reads, in one-letter code: GPI inositol-deacylase (390 aa).

The helical transmembrane segment at 21–41 threads the bilayer; that stretch reads FIVYFIICLTIIISALGVYLY. The active site involves serine 202. The helical transmembrane segment at 354 to 374 threads the bilayer; the sequence is VHLLSLTIFALKWTIIVLAII.

The protein belongs to the GPI inositol-deacylase family.

It is found in the endoplasmic reticulum membrane. Functionally, involved in inositol deacylation of GPI-anchored proteins which plays important roles in the quality control and ER-associated degradation of GPI-anchored proteins. This Candida albicans (strain SC5314 / ATCC MYA-2876) (Yeast) protein is GPI inositol-deacylase (BST1).